We begin with the raw amino-acid sequence, 259 residues long: Zinc import ATP-binding protein ZnuC (259 aa).

The 215-residue stretch at 11–225 folds into the ABC transporter domain; the sequence is IRLENIYVHR…PEYLAIFGGQ (215 aa). 43 to 50 contributes to the ATP binding site; it reads GPNGAGKS.

It belongs to the ABC transporter superfamily. Zinc importer (TC 3.A.1.15.5) family. The complex is composed of two ATP-binding proteins (ZnuC), two transmembrane proteins (ZnuB) and a solute-binding protein (ZnuA).

Its subcellular location is the cell inner membrane. It carries out the reaction Zn(2+)(out) + ATP(in) + H2O(in) = Zn(2+)(in) + ADP(in) + phosphate(in) + H(+)(in). In terms of biological role, part of the ABC transporter complex ZnuABC involved in zinc import. Responsible for energy coupling to the transport system. The protein is Zinc import ATP-binding protein ZnuC of Acinetobacter baylyi (strain ATCC 33305 / BD413 / ADP1).